The sequence spans 156 residues: Transcription elongation factor GreA (156 aa).

Positions Ala46 to Glu66 form a coiled coil.

This sequence belongs to the GreA/GreB family.

Necessary for efficient RNA polymerase transcription elongation past template-encoded arresting sites. The arresting sites in DNA have the property of trapping a certain fraction of elongating RNA polymerases that pass through, resulting in locked ternary complexes. Cleavage of the nascent transcript by cleavage factors such as GreA or GreB allows the resumption of elongation from the new 3'terminus. GreA releases sequences of 2 to 3 nucleotides. This is Transcription elongation factor GreA from Paracoccus denitrificans (strain Pd 1222).